A 113-amino-acid chain; its full sequence is Large ribosomal subunit protein bL17 (113 aa).

This sequence belongs to the bacterial ribosomal protein bL17 family. In terms of assembly, part of the 50S ribosomal subunit. Contacts protein L32.

This is Large ribosomal subunit protein bL17 from Symbiobacterium thermophilum (strain DSM 24528 / JCM 14929 / IAM 14863 / T).